A 49-amino-acid polypeptide reads, in one-letter code: Large ribosomal subunit protein bL33B (49 aa).

The protein belongs to the bacterial ribosomal protein bL33 family.

In Bacillus licheniformis, this protein is Large ribosomal subunit protein bL33B (rpmGB).